A 909-amino-acid chain; its full sequence is GTPase activating protein homolog 4 (909 aa).

An F-BAR domain is found at 1 to 257 (MASLIGSAKL…PTPDFQFESC (257 aa)). The region spanning 322 to 513 (IPIEEIMFKQ…LIIEGYLKLS (192 aa)) is the Rho-GAP domain. Positions 529–909 (IPSFSNNNNN…QRVPPPPSQS (381 aa)) are disordered. 2 stretches are compositionally biased toward low complexity: residues 533–562 (SNNN…ITTN) and 571–602 (SSTT…TPQQ). A compositionally biased stretch (pro residues) spans 609 to 625 (SYQPPQPPPTMAPPPLF). Positions 651-674 (QYTQSSSNLPPIQLGVTNSPSKPQ) are enriched in polar residues. A coiled-coil region spans residues 672–809 (KPQLSDKQKE…QQLQQQSNGS (138 aa)). Residues 675-716 (LSDKQKEKEKEKEKEKEKEKEREKEKEKEKEKEKEKEKEKEK) show a composition bias toward basic and acidic residues. Low complexity predominate over residues 723 to 741 (SSSTSPNSSSLSISNFLSS). Positions 742–765 (NKDKDKEKDKEKEKEKEKEKDKEI) are enriched in basic and acidic residues. Positions 767 to 785 (ATNSTPEKPVSNRMSLIFS) are enriched in polar residues. Composition is skewed to low complexity over residues 786–828 (QQLQ…MSPS) and 843–892 (SGTS…ELKS).

The protein resides in the cytoplasm. Its subcellular location is the contractile vacuole. Rho GTPase-activating protein involved in the signal transduction pathway. The sequence is that of GTPase activating protein homolog 4 (mgp4) from Dictyostelium discoideum (Social amoeba).